We begin with the raw amino-acid sequence, 662 residues long: MKTSSLTGSLFFTTPKFARLRFAFKLSFAIVLSLFLGFHLQLETPRWSVLTAAIVAAGPAFAAGGEPFSGAIRHRGMLRIIGTFIGCIGALVIIIATVRAPVVMLMLCCIWAGLCTWVSSLVKVENAYIFGLAGYTALIIIVSTQGTPLLTPQFAVERCSEIVLGIVCAILADLLFSPRSIKQDVDRSIGELLVDQYRLLQLSMSGTEKEAIDAAWHALVRKTTALSGMRSSLMLESSRWQNSNRRLTSLHTQSLMMITQACETYLILQDVPTPVKSSLKMVLDQPVESLRDVHCRVKALRHLIAADSRDVPPTLIDWVGAATRYLLLAKGVQANGRLNTIEADVLNSDVEIKAPSAETHHAMINGLRTGVATALGCLFWLSTGWTSGSVCMVMIAVVTSLAMRLPNPQMMAKDFLFGTIYALPLGALMFMFIMPSTQQSMLLLCLSLGGMAFFLGLEVQKRRLGSLGALASTINILVLDNPMTFNVSQFLDSAIGQIIGCFLALMVIMLIRDNTKAHTGRTLLNRFVYGAVSALTTNRARRKENHLPALYQQLFLLLNRFPDDIAKYRLALWLIIMHQRLRTLDIPQNAALSAFHRQIRATAEQVISARRDATRSRYFAQLLDELERYQQMLTEQQLPPSVTAPVGRLTGILRDYQHALSN.

11 helical membrane-spanning segments follow: residues 22–42 (FAFK…HLQL), 52–72 (AAIV…SGAI), 76–96 (GMLR…IIIA), 102–122 (VVML…SSLV), 129–149 (IFGL…GTPL), 161–181 (EIVL…PRSI), 378–398 (LFWL…IAVV), 415–435 (FLFG…FIMP), 439–459 (QSML…GLEV), 465–485 (GSLG…PMTF), and 491–511 (LDSA…IMLI).

It belongs to the aromatic acid exporter ArAE (TC 2.A.85) family.

The protein resides in the cell inner membrane. In terms of biological role, forms an efflux pump with AaeA. Could function as a metabolic relief valve, allowing to eliminate certain compounds when they accumulate to high levels in the cell. The sequence is that of p-hydroxybenzoic acid efflux pump subunit AaeB from Pectobacterium atrosepticum (strain SCRI 1043 / ATCC BAA-672) (Erwinia carotovora subsp. atroseptica).